A 153-amino-acid polypeptide reads, in one-letter code: FAD synthase (153 aa).

Residues 9 to 10, 14 to 17, Asn-92, and Tyr-119 each bind ATP; these read TF and HPGH.

It belongs to the archaeal FAD synthase family. In terms of assembly, homodimer. Requires a divalent metal cation as cofactor.

The enzyme catalyses FMN + ATP + H(+) = FAD + diphosphate. It functions in the pathway cofactor biosynthesis; FAD biosynthesis; FAD from FMN: step 1/1. In terms of biological role, catalyzes the transfer of the AMP portion of ATP to flavin mononucleotide (FMN) to produce flavin adenine dinucleotide (FAD) coenzyme. The polypeptide is FAD synthase (Methanosphaerula palustris (strain ATCC BAA-1556 / DSM 19958 / E1-9c)).